A 310-amino-acid polypeptide reads, in one-letter code: MTAKIFIDGEHGTTGLQIRARLGERRDIELLSIPVERRKDPAARAEFLNAADIAILCLPDDAARESVSLIANDTTRVIDASTAYRVSEGWAYGFPEMDKSQSKAIAQAKRVANPGCWPQGPIALLRPLVSAGLLPADFPVTINGITGYSGGGRSMIEDYEGKGEDAPEFFPYGLTLSHKHLPELRTYAKLARDPLMQPVVGNFAQGMITMVPLQLGHLPRVPKGEELHAAIADHYAGIEGSAVEVAPFQAIERSPEIEPERYNDTNTMRLYVFANDARAQALLLAVYDNLGKGASGAAVQNLDLMLSGLR.

Cys-116 is an active-site residue.

Belongs to the NAGSA dehydrogenase family. Type 2 subfamily.

It localises to the cytoplasm. The catalysed reaction is N-acetyl-L-glutamate 5-semialdehyde + phosphate + NADP(+) = N-acetyl-L-glutamyl 5-phosphate + NADPH + H(+). The protein operates within amino-acid biosynthesis; L-arginine biosynthesis; N(2)-acetyl-L-ornithine from L-glutamate: step 3/4. Catalyzes the NADPH-dependent reduction of N-acetyl-5-glutamyl phosphate to yield N-acetyl-L-glutamate 5-semialdehyde. In Chelativorans sp. (strain BNC1), this protein is N-acetyl-gamma-glutamyl-phosphate reductase.